A 72-amino-acid polypeptide reads, in one-letter code: Translation initiation factor IF-1 (72 aa).

The 72-residue stretch at 1–72 (MAKEDTLEFP…TKGRINYRFK (72 aa)) folds into the S1-like domain.

The protein belongs to the IF-1 family. Component of the 30S ribosomal translation pre-initiation complex which assembles on the 30S ribosome in the order IF-2 and IF-3, IF-1 and N-formylmethionyl-tRNA(fMet); mRNA recruitment can occur at any time during PIC assembly.

The protein localises to the cytoplasm. In terms of biological role, one of the essential components for the initiation of protein synthesis. Stabilizes the binding of IF-2 and IF-3 on the 30S subunit to which N-formylmethionyl-tRNA(fMet) subsequently binds. Helps modulate mRNA selection, yielding the 30S pre-initiation complex (PIC). Upon addition of the 50S ribosomal subunit IF-1, IF-2 and IF-3 are released leaving the mature 70S translation initiation complex. The sequence is that of Translation initiation factor IF-1 from Ruegeria sp. (strain TM1040) (Silicibacter sp.).